Here is a 171-residue protein sequence, read N- to C-terminus: Disulfide bond formation protein B (171 aa).

Topologically, residues 1–13 (MSALTRFAQSRLA) are cytoplasmic. Residues 14-30 (WTLLLLTAVGLEACALF) form a helical membrane-spanning segment. The Periplasmic segment spans residues 31–48 (FQHVMKLDPCVMCIYQRL). A disulfide bridge links C40 with C43. Residues 49-64 (AVLGVLTAGLIGVVGH) form a helical membrane-spanning segment. Residues 65-71 (QFRLLRF) are Cytoplasmic-facing. A helical membrane pass occupies residues 72 to 89 (LGVLLWGVSAAWGLKLAL). Over 90-144 (ELVEMQTNPSPFSTCSFLPEFPEWMPLHEWFPSVFLPTGMCTDIPWEMFGITMSQ) the chain is Periplasmic. An intrachain disulfide couples C104 to C130. Residues 145-163 (WMVVAFSTYLIALVVFIVP) form a helical membrane-spanning segment. Residues 164 to 171 (ALMPTKKA) lie on the Cytoplasmic side of the membrane.

This sequence belongs to the DsbB family.

It is found in the cell inner membrane. Functionally, required for disulfide bond formation in some periplasmic proteins. Acts by oxidizing the DsbA protein. The polypeptide is Disulfide bond formation protein B (Shewanella loihica (strain ATCC BAA-1088 / PV-4)).